The primary structure comprises 122 residues: Holo-[acyl-carrier-protein] synthase (122 aa).

Mg(2+)-binding residues include D9 and E58.

The protein belongs to the P-Pant transferase superfamily. AcpS family. It depends on Mg(2+) as a cofactor.

The protein resides in the cytoplasm. The catalysed reaction is apo-[ACP] + CoA = holo-[ACP] + adenosine 3',5'-bisphosphate + H(+). Functionally, transfers the 4'-phosphopantetheine moiety from coenzyme A to a Ser of acyl-carrier-protein. In Chlamydia felis (strain Fe/C-56) (Chlamydophila felis), this protein is Holo-[acyl-carrier-protein] synthase.